The sequence spans 295 residues: Ribosomal protein L11 methyltransferase (295 aa).

The S-adenosyl-L-methionine site is built by T150, G171, D193, and N232.

The protein belongs to the methyltransferase superfamily. PrmA family.

The protein resides in the cytoplasm. It catalyses the reaction L-lysyl-[protein] + 3 S-adenosyl-L-methionine = N(6),N(6),N(6)-trimethyl-L-lysyl-[protein] + 3 S-adenosyl-L-homocysteine + 3 H(+). Its function is as follows. Methylates ribosomal protein L11. The protein is Ribosomal protein L11 methyltransferase of Neisseria meningitidis serogroup C / serotype 2a (strain ATCC 700532 / DSM 15464 / FAM18).